The sequence spans 390 residues: Pyruvate dehydrogenase E1 component subunit alpha, somatic form, mitochondrial (390 aa).

The transit peptide at 1–29 (MRKMLAAVSRVLSGASQKPASRVLVASRN) directs the protein to the mitochondrion. At Lys-63 the chain carries N6-acetyllysine; alternate. Lys-63 is subject to N6-succinyllysine; alternate. Positions 92, 118, 119, 157, 165, 167, 196, 197, 198, 225, and 227 each coordinate pyruvate. Thiamine diphosphate is bound by residues Tyr-118 and Arg-119. 6 residues coordinate thiamine diphosphate: Gly-165, Val-167, Asp-196, Gly-197, Ala-198, and Asn-225. Asp-196 provides a ligand contact to Mg(2+). Mg(2+)-binding residues include Asn-225 and Tyr-227. Residue Ser-232 is modified to Phosphoserine; by PDK1. Lys-244 is modified (N6-acetyllysine; alternate). Residue Lys-244 is modified to N6-succinyllysine; alternate. Position 277 is an N6-succinyllysine (Lys-277). Position 292 (His-292) interacts with thiamine diphosphate. The residue at position 293 (Ser-293) is a Phosphoserine; by PDK1, PDK2, PDK3 and PDK4. Ser-295 is modified (phosphoserine). Position 300 is a phosphoserine; by PDK1, PDK2, PDK3 and PDK4 (Ser-300). Residue Tyr-301 is modified to Phosphotyrosine. An N6-acetyllysine; alternate modification is found at Lys-313. Residue Lys-313 is modified to N6-succinyllysine; alternate. An N6-acetyllysine mark is found at Lys-321 and Lys-336. At Lys-385 the chain carries N6-succinyllysine.

As to quaternary structure, heterotetramer of two PDHA1 and two PDHB subunits. The heterotetramer interacts with DLAT, and is part of the multimeric pyruvate dehydrogenase complex that contains multiple copies of pyruvate dehydrogenase (E1), dihydrolipoamide acetyltransferase (DLAT, E2) and lipoamide dehydrogenase (DLD, E3). These subunits are bound to an inner core composed of about 48 DLAT and 12 PDHX molecules. Thiamine diphosphate serves as cofactor. It depends on Mg(2+) as a cofactor. In terms of processing, phosphorylation at Ser-232, Ser-293 and Ser-300 by PDK family kinases inactivates the enzyme; for this phosphorylation at a single site is sufficient. Dephosphorylation at all three sites, i.e. at Ser-232, Ser-293 and Ser-300, is required for reactivation. Acetylation alters the phosphorylation pattern. Deacetylated by SIRT3. As to expression, ubiquitous.

It localises to the mitochondrion matrix. It catalyses the reaction N(6)-[(R)-lipoyl]-L-lysyl-[protein] + pyruvate + H(+) = N(6)-[(R)-S(8)-acetyldihydrolipoyl]-L-lysyl-[protein] + CO2. With respect to regulation, pyruvate dehydrogenase activity is inhibited by phosphorylation of PDHA1; it is reactivated by dephosphorylation. Functionally, the pyruvate dehydrogenase complex catalyzes the overall conversion of pyruvate to acetyl-CoA and CO(2), and thereby links the glycolytic pathway to the tricarboxylic cycle. This chain is Pyruvate dehydrogenase E1 component subunit alpha, somatic form, mitochondrial (PDHA1), found in Homo sapiens (Human).